A 466-amino-acid polypeptide reads, in one-letter code: Soluble pyridine nucleotide transhydrogenase (466 aa).

36–45 contacts FAD; the sequence is ERYHNIGGGC.

It belongs to the class-I pyridine nucleotide-disulfide oxidoreductase family. It depends on FAD as a cofactor.

It is found in the cytoplasm. It catalyses the reaction NAD(+) + NADPH = NADH + NADP(+). Functionally, conversion of NADPH, generated by peripheral catabolic pathways, to NADH, which can enter the respiratory chain for energy generation. This is Soluble pyridine nucleotide transhydrogenase from Erwinia tasmaniensis (strain DSM 17950 / CFBP 7177 / CIP 109463 / NCPPB 4357 / Et1/99).